The sequence spans 147 residues: Hemoglobin subunit beta (147 aa).

Residues 3–147 (NWTKTEKATI…VMSALGKQYH (145 aa)) form the Globin domain. The heme b site is built by His-64 and His-93.

Belongs to the globin family. Heterotetramer of two alpha chains and two beta chains. Red blood cells.

Functionally, involved in oxygen transport from gills to the various peripheral tissues. The sequence is that of Hemoglobin subunit beta (hbb) from Gymnodraco acuticeps (Antarctic dragonfish).